Here is a 414-residue protein sequence, read N- to C-terminus: Imidazolonepropionase (414 aa).

Fe(3+) is bound by residues His-95 and His-97. Residues His-95 and His-97 each coordinate Zn(2+). Arg-104, Tyr-162, and His-189 together coordinate 4-imidazolone-5-propanoate. Tyr-162 serves as a coordination point for N-formimidoyl-L-glutamate. A Fe(3+)-binding site is contributed by His-252. His-252 is a Zn(2+) binding site. Gln-255 is a binding site for 4-imidazolone-5-propanoate. Asp-326 lines the Fe(3+) pocket. Asp-326 contributes to the Zn(2+) binding site. Positions 328 and 330 each coordinate N-formimidoyl-L-glutamate. Ser-331 provides a ligand contact to 4-imidazolone-5-propanoate.

This sequence belongs to the metallo-dependent hydrolases superfamily. HutI family. Requires Zn(2+) as cofactor. Fe(3+) serves as cofactor.

The protein resides in the cytoplasm. The enzyme catalyses 4-imidazolone-5-propanoate + H2O = N-formimidoyl-L-glutamate. It participates in amino-acid degradation; L-histidine degradation into L-glutamate; N-formimidoyl-L-glutamate from L-histidine: step 3/3. Catalyzes the hydrolytic cleavage of the carbon-nitrogen bond in imidazolone-5-propanoate to yield N-formimidoyl-L-glutamate. It is the third step in the universal histidine degradation pathway. This Streptomyces avermitilis (strain ATCC 31267 / DSM 46492 / JCM 5070 / NBRC 14893 / NCIMB 12804 / NRRL 8165 / MA-4680) protein is Imidazolonepropionase.